The sequence spans 418 residues: Probable basic-leucine zipper transcription factor E (418 aa).

A coiled-coil region spans residues isoleucine 8–threonine 47. 2 stretches are compositionally biased toward low complexity: residues phenylalanine 51–asparagine 71 and isoleucine 95–threonine 134. 4 disordered regions span residues phenylalanine 51–phenylalanine 75, isoleucine 95–lysine 149, proline 165–threonine 196, and lysine 211–arginine 252. Basic residues predominate over residues valine 169–alanine 179. A compositionally biased stretch (low complexity) spans lysine 180–threonine 196. The segment covering aspartate 220 to asparagine 239 has biased composition (acidic residues). A bZIP domain is found at glycine 246–leucine 309. The tract at residues arginine 248–lysine 268 is basic motif. The leucine-zipper stretch occupies residues leucine 274–leucine 281. The stretch at serine 324 to asparagine 362 forms a coiled coil. The segment at asparagine 336–aspartate 418 is disordered.

It belongs to the bZIP family.

The protein resides in the nucleus. Functionally, probable transcriptional regulator. The polypeptide is Probable basic-leucine zipper transcription factor E (bzpE) (Dictyostelium discoideum (Social amoeba)).